The chain runs to 120 residues: uncharacterized protein (120 aa).

Asparagine 29 and asparagine 68 each carry an N-linked (GlcNAc...) asparagine; by host glycan. Residues 74-94 traverse the membrane as a helical segment; sequence IFNGLGFILIVIFIYLLIITL.

The protein belongs to the asfivirus B117L family.

The protein localises to the host membrane. It is found in the virion. This is an uncharacterized protein from Ornithodoros (relapsing fever ticks).